The chain runs to 657 residues: MKSFKNKNTLRRKKAFPVFTKILLVSFLVWVLKCSNNCNNGNGSGDSFDFRNKRTLAQKQHEHHHHHHHHHHHQHQAPHQAPHQAHHHHHHGEVNHQAPQVHQQVHGQDQAHHHHHHHHHHLHPQQPQGTVANPPSNEPVVKTQVFREARPGGGFKAYEEKYESKHYKLKENVVDGKKDCDEKYEAANYAFSEECPYTVNDYSQENGPNIFALRKRFPLGMNDEDEEGKEALAIKDKLPGGLDEYQNQLYGICNETCTTCGPAAIDYVPADAPNGYAYGGSAHDGSHGNLRGHDNKGSEGYGYEAPYNPGFNGAPGSNGMQNYVHPWSGYSAPYGVPHGAAHGSRYSSFSSVNKYGKHGDEKHHSSKKHEGNDGEGEKKKKSKKHKDHDGEKKKSKKHKDNEDAESVKSKKHKSHDCEKKKSKKHKDNEDAESVKSKKVLKKREKSIMEKNHAAKKLTKKIKIKKKTNNSKSDGSKAHEKKENETKNTAGENKKVDSTSADNKSTNAATPGAKDKTQGGKTDKTGASTNAATNKGQCAAEGATKGATKEASTSKEATKEASTSKEATKEASTSKEATKEASTSKGATKEASTTEGATKGASTTAGSTTGATTGANAVQSKDETADKNAANNGEQVMSRGQAQLQEAGKKKKKRGCCG.

Residues 1 to 34 (MKSFKNKNTLRRKKAFPVFTKILLVSFLVWVLKC) form the signal peptide. Asn-42 is a glycosylation site (N-linked (GlcNAc...) asparagine). Residues 57–76 (AQKQHEHHHHHHHHHHHQHQ) are compositionally biased toward basic residues. 3 disordered regions span residues 57–138 (AQKQ…PSNE), 282–301 (AHDGSHGNLRGHDNKGSEGY), and 352–657 (VNKY…GCCG). Over residues 99–108 (PQVHQQVHGQ) the composition is skewed to low complexity. Residues 112 to 123 (HHHHHHHHHHLH) show a composition bias toward basic residues. Basic and acidic residues-rich tracts occupy residues 357 to 378 (KHGDEKHHSSKKHEGNDGEGEK) and 399 to 408 (KDNEDAESVK). Basic residues predominate over residues 409–425 (SKKHKSHDCEKKKSKKH). Basic and acidic residues predominate over residues 426–435 (KDNEDAESVK). Over residues 453–468 (AAKKLTKKIKIKKKTN) the composition is skewed to basic residues. The segment covering 473-496 (DGSKAHEKKENETKNTAGENKKVD) has biased composition (basic and acidic residues). Residues 497 to 508 (STSADNKSTNAA) are compositionally biased toward polar residues. Basic and acidic residues-rich tracts occupy residues 512–523 (AKDKTQGGKTDK) and 551–578 (STSKEATKEASTSKEATKEASTSKEATK). Positions 590–614 (ASTTEGATKGASTTAGSTTGATTGA) are enriched in low complexity. Positions 628-643 (AANNGEQVMSRGQAQL) are enriched in polar residues. Basic residues predominate over residues 648–657 (KKKKKRGCCG).

It localises to the secreted. In terms of biological role, KAHRP might mimick human histidine-rich glycoproteins to anchor host thrombospondin or a parasite analog in a binding complex with the endothelial cell receptor. The polypeptide is Knob-associated histidine-rich protein (SD17) (Plasmodium falciparum (isolate NF7 / Ghana)).